A 470-amino-acid polypeptide reads, in one-letter code: GTPase grn1 (470 aa).

Positions 1–16 (MVSLKKKSKRRTTRLR) are enriched in basic residues. Residues 1-56 (MVSLKKKSKRRTTRLRSRIEKKAAESKRKQKRADKKNPQWKSRIPKDPGIPNSFPY) are disordered. Residues 17 to 27 (SRIEKKAAESK) show a composition bias toward basic and acidic residues. The 181-residue stretch at 153–333 (DKEFKKVVEA…LVDSPGIVFP (181 aa)) folds into the CP-type G domain. GTP is bound by residues 202 to 205 (NKID), 276 to 283 (GYPNVGKS), and 326 to 329 (DSPG). Positions 405–415 (ARKRGRLGRGG) are RNA-binding.

It belongs to the TRAFAC class YlqF/YawG GTPase family.

The protein localises to the nucleus. It localises to the nucleolus. Functionally, required for optimal growth. Required for normal processing of ribosomal pre-rRNA. Required for nuclear export of ribosomal protein rpl2501. This chain is GTPase grn1, found in Schizosaccharomyces pombe (strain 972 / ATCC 24843) (Fission yeast).